The sequence spans 488 residues: Glutamyl-tRNA(Gln) amidotransferase subunit A (488 aa).

Residues Lys77 and Ser152 each act as charge relay system in the active site. Catalysis depends on Ser176, which acts as the Acyl-ester intermediate.

Belongs to the amidase family. GatA subfamily. In terms of assembly, heterotrimer of A, B and C subunits.

The catalysed reaction is L-glutamyl-tRNA(Gln) + L-glutamine + ATP + H2O = L-glutaminyl-tRNA(Gln) + L-glutamate + ADP + phosphate + H(+). In terms of biological role, allows the formation of correctly charged Gln-tRNA(Gln) through the transamidation of misacylated Glu-tRNA(Gln) in organisms which lack glutaminyl-tRNA synthetase. The reaction takes place in the presence of glutamine and ATP through an activated gamma-phospho-Glu-tRNA(Gln). The polypeptide is Glutamyl-tRNA(Gln) amidotransferase subunit A (Streptococcus pyogenes serotype M49 (strain NZ131)).